The following is a 372-amino-acid chain: Queuine tRNA-ribosyltransferase (372 aa).

Aspartate 92 (proton acceptor) is an active-site residue. Residues 92–96 (DSGGF), aspartate 146, glutamine 188, and glycine 215 each bind substrate. An RNA binding region spans residues 246–252 (GIGTLRE). Aspartate 265 serves as the catalytic Nucleophile. Residues 270 to 274 (TRLGR) are RNA binding; important for wobble base 34 recognition. Zn(2+)-binding residues include cysteine 303, cysteine 305, cysteine 308, and histidine 334.

Belongs to the queuine tRNA-ribosyltransferase family. As to quaternary structure, homodimer. Within each dimer, one monomer is responsible for RNA recognition and catalysis, while the other monomer binds to the replacement base PreQ1. The cofactor is Zn(2+).

It catalyses the reaction 7-aminomethyl-7-carbaguanine + guanosine(34) in tRNA = 7-aminomethyl-7-carbaguanosine(34) in tRNA + guanine. It participates in tRNA modification; tRNA-queuosine biosynthesis. In terms of biological role, catalyzes the base-exchange of a guanine (G) residue with the queuine precursor 7-aminomethyl-7-deazaguanine (PreQ1) at position 34 (anticodon wobble position) in tRNAs with GU(N) anticodons (tRNA-Asp, -Asn, -His and -Tyr). Catalysis occurs through a double-displacement mechanism. The nucleophile active site attacks the C1' of nucleotide 34 to detach the guanine base from the RNA, forming a covalent enzyme-RNA intermediate. The proton acceptor active site deprotonates the incoming PreQ1, allowing a nucleophilic attack on the C1' of the ribose to form the product. After dissociation, two additional enzymatic reactions on the tRNA convert PreQ1 to queuine (Q), resulting in the hypermodified nucleoside queuosine (7-(((4,5-cis-dihydroxy-2-cyclopenten-1-yl)amino)methyl)-7-deazaguanosine). The chain is Queuine tRNA-ribosyltransferase from Synechococcus sp. (strain CC9902).